The sequence spans 97 residues: Integration host factor subunit beta (97 aa).

It belongs to the bacterial histone-like protein family. As to quaternary structure, heterodimer of an alpha and a beta chain.

In terms of biological role, this protein is one of the two subunits of integration host factor, a specific DNA-binding protein that functions in genetic recombination as well as in transcriptional and translational control. The sequence is that of Integration host factor subunit beta from Buchnera aphidicola subsp. Cinara cedri (strain Cc).